The chain runs to 579 residues: Mitochondrial distribution and morphology protein 36 (579 aa).

The interval 1 to 27 is disordered; the sequence is MDENGTVKPGYELKGLNSGNSRSNMDK. Ser-42 carries the post-translational modification Phosphoserine. 2 disordered regions span residues 378–401 and 446–518; these read TPIN…GRRL and DNKH…ESQS. Polar residues predominate over residues 379–390; sequence PINSSDSDNLSN. The span at 446-463 shows a compositional bias: basic and acidic residues; the sequence is DNKHSTKDTDSNIRRNEH. The span at 495-518 shows a compositional bias: low complexity; it reads PSQSSSRMSTLPLSPSSSLLESQS.

Functionally, involved in mitochondrial distribution and morphology. The protein is Mitochondrial distribution and morphology protein 36 (MDM36) of Saccharomyces cerevisiae (strain ATCC 204508 / S288c) (Baker's yeast).